The following is a 227-amino-acid chain: uncharacterized protein (227 aa).

A signal peptide spans 1-23; sequence MKKLTVTFLTFISIFFAATAAFA.

This is an uncharacterized protein from Coxiella burnetii (strain RSA 493 / Nine Mile phase I).